The primary structure comprises 368 residues: Glutamate 5-kinase (368 aa).

K9 provides a ligand contact to ATP. Residues S49, D136, and N148 each contribute to the substrate site. ATP-binding positions include 168–169 and 210–216; these read TD and TGGMMTK. The PUA domain maps to 275–353; it reads AGIITIDNGA…ADIENVLGYE (79 aa).

The protein belongs to the glutamate 5-kinase family.

The protein resides in the cytoplasm. The enzyme catalyses L-glutamate + ATP = L-glutamyl 5-phosphate + ADP. It functions in the pathway amino-acid biosynthesis; L-proline biosynthesis; L-glutamate 5-semialdehyde from L-glutamate: step 1/2. In terms of biological role, catalyzes the transfer of a phosphate group to glutamate to form L-glutamate 5-phosphate. The polypeptide is Glutamate 5-kinase (Haemophilus influenzae (strain PittGG)).